The primary structure comprises 466 residues: Histidine--tRNA ligase (466 aa).

This sequence belongs to the class-II aminoacyl-tRNA synthetase family. Homodimer.

Its subcellular location is the cytoplasm. It catalyses the reaction tRNA(His) + L-histidine + ATP = L-histidyl-tRNA(His) + AMP + diphosphate + H(+). The sequence is that of Histidine--tRNA ligase from Bifidobacterium longum subsp. infantis (strain ATCC 15697 / DSM 20088 / JCM 1222 / NCTC 11817 / S12).